The sequence spans 432 residues: Glutamyl-tRNA reductase (432 aa).

Substrate-binding positions include 55 to 58 (TCNR), serine 114, 119 to 121 (ETQ), and glutamine 125. The Nucleophile role is filled by cysteine 56. 194-199 (GAGEMI) is a binding site for NADP(+).

This sequence belongs to the glutamyl-tRNA reductase family. In terms of assembly, homodimer.

It carries out the reaction (S)-4-amino-5-oxopentanoate + tRNA(Glu) + NADP(+) = L-glutamyl-tRNA(Glu) + NADPH + H(+). Its pathway is porphyrin-containing compound metabolism; protoporphyrin-IX biosynthesis; 5-aminolevulinate from L-glutamyl-tRNA(Glu): step 1/2. In terms of biological role, catalyzes the NADPH-dependent reduction of glutamyl-tRNA(Glu) to glutamate 1-semialdehyde (GSA). The sequence is that of Glutamyl-tRNA reductase from Burkholderia multivorans (strain ATCC 17616 / 249).